The chain runs to 351 residues: Paired box protein 2 homolog (351 aa).

Positions 91-217 (SHTGVNQLGG…SSINRIVRNK (127 aa)) form a DNA-binding region, paired. Residues 94 to 150 (GVNQLGGVFVNGRPLPDTIRAQIVEMSQHGTRPCDISRQLKVSHGCVSKILGRYYST) are PAI subdomain. Residues 169 to 217 (RVVECIAGYKRANPTMFAWEIRQKLIEDQICGEENVPSVSSINRIVRNK) form an RED subdomain region. The span at 226 to 246 (PTSVTPSVARPSSATSQNQRS) shows a compositional bias: polar residues. Residues 226 to 258 (PTSVTPSVARPSSATSQNQRSPPRGVQQHMQQS) are disordered.

It localises to the nucleus. The protein localises to the chromosome. Transcription factor. Involved in negatively modulating apoptosis in germline and somatic cells, acting in partial redundancy with transcription factor egl-38/PAX5, probably by directly regulating transcription of apoptosis regulator ced-9. May bind to the DNA sequence motif 5'-GTAACG-3' in regulatory elements. This Caenorhabditis elegans protein is Paired box protein 2 homolog.